A 217-amino-acid polypeptide reads, in one-letter code: uncharacterized protein (217 aa).

In terms of domain architecture, ABC transporter spans 14–217 (LAVNNLCIER…NELATEIISL (204 aa)). 46–53 (GEIGSGKT) is an ATP binding site.

Belongs to the ABC transporter superfamily.

This is an uncharacterized protein from Haemophilus influenzae (strain ATCC 51907 / DSM 11121 / KW20 / Rd).